The following is a 231-amino-acid chain: UPF0758 protein RBAM_025090 (231 aa).

Positions 109-231 constitute an MPN domain; that stretch reads VIRSPEDGAK…FVSLKEKGYL (123 aa). Zn(2+)-binding residues include H180, H182, and D193. Residues 180-193 carry the JAMM motif motif; the sequence is HNHPSGDPTPSRED.

It belongs to the UPF0758 family.

The polypeptide is UPF0758 protein RBAM_025090 (Bacillus velezensis (strain DSM 23117 / BGSC 10A6 / LMG 26770 / FZB42) (Bacillus amyloliquefaciens subsp. plantarum)).